The following is a 368-amino-acid chain: N-acetylneuraminate epimerase (368 aa).

The N-terminal stretch at 1-19 (MNKTITALAIMMASFAANA) is a signal peptide. 7 Kelch repeats span residues 40-84 (TVYI…AFID), 86-137 (NLYV…FVHN), 139-173 (KAYV…KINA), 174-219 (YYFD…VNKG), 222-265 (TWLI…VAGG), 287-336 (ENYQ…PWNN), and 338-367 (LLII…VTVQ). Glutamate 228 functions as the Proton acceptor in the catalytic mechanism.

This sequence belongs to the NanM family. In terms of assembly, homodimer.

The protein resides in the periplasm. It catalyses the reaction N-acetyl-alpha-neuraminate = N-acetyl-beta-neuraminate. In terms of biological role, converts alpha-N-acetylneuranimic acid (Neu5Ac) to the beta-anomer, accelerating the equilibrium between the alpha- and beta-anomers. Probably facilitates sialidase-negative bacteria to compete successfully for limited amounts of extracellular Neu5Ac, which is likely taken up in the beta-anomer. In addition, the rapid removal of sialic acid from solution might be advantageous to the bacterium to damp down host responses. The chain is N-acetylneuraminate epimerase from Shigella boydii serotype 4 (strain Sb227).